The chain runs to 487 residues: METVQLRNPPRRQLKKLDEDSLTKQPEEVFDVLEKLGEGSYGSVYKAIHKETGQIVAIKQVPVESDLQEIIKEISIMQQCDSPHVVKYYGSYFKNTDLWIVMEYCGAGSVSDIIRLRNKTLTEDEIATILQSTLKGLEYLHFMRKIHRDIKAGNILLNTEGHAKLADFGVAGQLTDTMAKRNTVIGTPFWMAPEVIQEIGYNCVADIWSLGITAIEMAEGKPPYADIHPMRAIFMIPTNPPPTFRKPELWSDNFTDFVRQCLVKSPDQRATATQLLQHPFVKSAKGVSILRDLINEAMDVKLKRQEAQQREVDQDDEENSEEDELDSGTMVRAVGDEMGTVRVASTMSDGANTMIEHDDTLPSQLGTMVINADDEEEEGTMKRRDETMQPAKPSFLEYFEQKEKENQINSFGKSVPGPLKNSSDWKVPQDGDYEFLKSWTVEDLQKRLLALDPMMEQEIEEIRQKYQSKRQPILDAIEAKKRRQQNF.

Residue M1 is modified to N-acetylmethionine. T3 carries the phosphothreonine modification. The Protein kinase domain occupies 30 to 281; the sequence is FDVLEKLGEG…ATQLLQHPFV (252 aa). Residues 36-44 and K59 contribute to the ATP site; that span reads LGEGSYGSV. Catalysis depends on D149, which acts as the Proton acceptor. At T183 the chain carries Phosphothreonine; by autocatalysis. The residue at position 265 (S265) is a Phosphoserine. A coiled-coil region spans residues 290-310; it reads LRDLINEAMDVKLKRQEAQQR. The interval 305–337 is disordered; it reads QEAQQREVDQDDEENSEEDELDSGTMVRAVGDE. A compositionally biased stretch (acidic residues) spans 313–326; sequence DQDDEENSEEDELD. The residue at position 320 (S320) is a Phosphoserine. Phosphothreonine occurs at positions 340 and 367. T387 is modified (phosphothreonine; by PKB/AKT1). Phosphoserine is present on residues S410 and S414. Y433 is modified (phosphotyrosine). In terms of domain architecture, SARAH spans 433-480; it reads YEFLKSWTVEDLQKRLLALDPMMEQEIEEIRQKYQSKRQPILDAIEAK.

This sequence belongs to the protein kinase superfamily. STE Ser/Thr protein kinase family. STE20 subfamily. As to quaternary structure, homodimer; mediated via the coiled-coil region. Interacts with NORE1, which inhibits autoactivation. Interacts with and stabilizes SAV1. Interacts with RASSF1. Interacts with FOXO3. Interacts with RASSF2 (via SARAH domain). Interacts with AR, PKB/AKT1, TNNI3 and SIRT1. Interacts with DLG5 (via PDZ domain 3). Interacts with MARK3 and SCRIB in the presence of DLG5. Mg(2+) serves as cofactor. Autophosphorylated on serine and threonine residues. Phosphorylation at Thr-387 by PKB/AKT1, leads to inhibition of its: kinase activity, nuclear translocation and autophosphorylation at Thr-183. It also diminishes its cleavage by caspases and its ability to phosphorylate FOXO3. Post-translationally, proteolytically cleaved by caspase-3 during apoptosis at Asp-326 and Asp-349 resulting in a 37 kDa or a 39 kDa subunit respectively. The 39 kDa subunit is further cleaved into the 37 kDa form. Proteolytic cleavage results in kinase activation and nuclear translocation of the truncated form (MST1/N). It is less likely that cleavage at Asp-349 is a prerequisite for activation as this site is not conserved in the murine ortholog.

The protein localises to the cytoplasm. It localises to the nucleus. It catalyses the reaction L-seryl-[protein] + ATP = O-phospho-L-seryl-[protein] + ADP + H(+). The enzyme catalyses L-threonyl-[protein] + ATP = O-phospho-L-threonyl-[protein] + ADP + H(+). Inhibited by the C-terminal non-catalytic region. Activated by caspase-cleavage. Full activation also requires homodimerization and autophosphorylation of Thr-183. Activated by RASSF1 which acts by preventing its dephosphorylation. Its function is as follows. Stress-activated, pro-apoptotic kinase which, following caspase-cleavage, enters the nucleus and induces chromatin condensation followed by internucleosomal DNA fragmentation. Key component of the Hippo signaling pathway which plays a pivotal role in organ size control and tumor suppression by restricting proliferation and promoting apoptosis. The core of this pathway is composed of a kinase cascade wherein STK3/MST2 and STK4/MST1, in complex with its regulatory protein SAV1, phosphorylates and activates LATS1/2 in complex with its regulatory protein MOB1, which in turn phosphorylates and inactivates YAP1 oncoprotein and WWTR1/TAZ. Phosphorylation of YAP1 by LATS2 inhibits its translocation into the nucleus to regulate cellular genes important for cell proliferation, cell death, and cell migration. STK3/MST2 and STK4/MST1 are required to repress proliferation of mature hepatocytes, to prevent activation of facultative adult liver stem cells (oval cells), and to inhibit tumor formation. Phosphorylates 'Ser-14' of histone H2B (H2BS14ph) during apoptosis. Phosphorylates FOXO3 upon oxidative stress, which results in its nuclear translocation and cell death initiation. Phosphorylates MOBKL1A, MOBKL1B and RASSF2. Phosphorylates TNNI3 (cardiac Tn-I) and alters its binding affinity to TNNC1 (cardiac Tn-C) and TNNT2 (cardiac Tn-T). Phosphorylates FOXO1 on 'Ser-212' and regulates its activation and stimulates transcription of PMAIP1 in a FOXO1-dependent manner. Phosphorylates SIRT1 and inhibits SIRT1-mediated p53/TP53 deacetylation, thereby promoting p53/TP53 dependent transcription and apoptosis upon DNA damage. Acts as an inhibitor of PKB/AKT1. Phosphorylates AR on 'Ser-650' and suppresses its activity by intersecting with PKB/AKT1 signaling and antagonizing formation of AR-chromatin complexes. The protein is Serine/threonine-protein kinase 4 (STK4) of Otolemur garnettii (Small-eared galago).